The sequence spans 510 residues: ATP synthase subunit alpha (510 aa).

Gly169 to Thr176 contributes to the ATP binding site.

This sequence belongs to the ATPase alpha/beta chains family. In terms of assembly, F-type ATPases have 2 components, CF(1) - the catalytic core - and CF(0) - the membrane proton channel. CF(1) has five subunits: alpha(3), beta(3), gamma(1), delta(1), epsilon(1). CF(0) has four main subunits: a(1), b(1), b'(1) and c(9-12).

The protein localises to the cell inner membrane. The catalysed reaction is ATP + H2O + 4 H(+)(in) = ADP + phosphate + 5 H(+)(out). Its function is as follows. Produces ATP from ADP in the presence of a proton gradient across the membrane. The alpha chain is a regulatory subunit. The sequence is that of ATP synthase subunit alpha from Rhodopseudomonas palustris (strain BisB5).